Here is a 239-residue protein sequence, read N- to C-terminus: tRNA (guanine-N(7)-)-methyltransferase (239 aa).

S-adenosyl-L-methionine contacts are provided by glutamate 69, glutamate 94, aspartate 121, and aspartate 144. Aspartate 144 is a catalytic residue. Lysine 148 lines the substrate pocket. The interaction with RNA stretch occupies residues 150–155; the sequence is RHNKRR. Substrate-binding positions include aspartate 180 and 217–220; that span reads TKFE.

This sequence belongs to the class I-like SAM-binding methyltransferase superfamily. TrmB family. In terms of assembly, monomer.

It catalyses the reaction guanosine(46) in tRNA + S-adenosyl-L-methionine = N(7)-methylguanosine(46) in tRNA + S-adenosyl-L-homocysteine. It participates in tRNA modification; N(7)-methylguanine-tRNA biosynthesis. In terms of biological role, catalyzes the formation of N(7)-methylguanine at position 46 (m7G46) in tRNA. In Yersinia pestis (strain Pestoides F), this protein is tRNA (guanine-N(7)-)-methyltransferase.